The primary structure comprises 218 residues: MLKMSGSYAPVEDSADELSVHSGNDNEIDLEKGLLPKCNTGNGGTTPCSEPPHYDSDAVVEMDMYENNIYMQTFKLRPFPKSGVTNFSNVVFQMKTYENNRHMQTFRLRPFAKNGVTNGVKLAQVLFLLLPFNFIFIACLFFRKASFTDFSLMGWILFGIWCLTCFLSSFILYAYHESWTKFARERPDDFAGILILLLFPGIVTMIVFYGIYMNSIYG.

The tract at residues 1-23 (MLKMSGSYAPVEDSADELSVHSG) is disordered. 3 helical membrane-spanning segments follow: residues 122 to 142 (LAQVLFLLLPFNFIFIACLFF), 152 to 172 (LMGWILFGIWCLTCFLSSFIL), and 191 to 211 (AGILILLLFPGIVTMIVFYGI).

The protein belongs to the WTF family.

The protein localises to the spore membrane. Its function is as follows. May act in meiotic drive. In Schizosaccharomyces kambucha (Fission yeast), this protein is Wtf element wtf7.